A 145-amino-acid chain; its full sequence is D-aminoacyl-tRNA deacylase (145 aa).

Residues 137–138 (GP) carry the Gly-cisPro motif, important for rejection of L-amino acids motif.

The protein belongs to the DTD family. In terms of assembly, homodimer.

It is found in the cytoplasm. It catalyses the reaction glycyl-tRNA(Ala) + H2O = tRNA(Ala) + glycine + H(+). It carries out the reaction a D-aminoacyl-tRNA + H2O = a tRNA + a D-alpha-amino acid + H(+). Functionally, an aminoacyl-tRNA editing enzyme that deacylates mischarged D-aminoacyl-tRNAs. Also deacylates mischarged glycyl-tRNA(Ala), protecting cells against glycine mischarging by AlaRS. Acts via tRNA-based rather than protein-based catalysis; rejects L-amino acids rather than detecting D-amino acids in the active site. By recycling D-aminoacyl-tRNA to D-amino acids and free tRNA molecules, this enzyme counteracts the toxicity associated with the formation of D-aminoacyl-tRNA entities in vivo and helps enforce protein L-homochirality. The protein is D-aminoacyl-tRNA deacylase of Salmonella paratyphi A (strain AKU_12601).